The chain runs to 269 residues: tRNA pseudouridine synthase A (269 aa).

The active-site Nucleophile is Asp51. Tyr109 is a binding site for substrate.

Belongs to the tRNA pseudouridine synthase TruA family. In terms of assembly, homodimer.

It carries out the reaction uridine(38/39/40) in tRNA = pseudouridine(38/39/40) in tRNA. Functionally, formation of pseudouridine at positions 38, 39 and 40 in the anticodon stem and loop of transfer RNAs. The polypeptide is tRNA pseudouridine synthase A (Haemophilus influenzae (strain PittGG)).